The following is a 470-amino-acid chain: MTRVERGRVLARAIERAVAHRASARRWTTTTRTPAWMVTGWMGGRGVDRSTAMTRFERCGSTASSKITAAPMVYVRGEEMTAYVMDLIRSRWIEPRVDVGGWETFDLRAKNRDDTEDRVLRDVIEAGKRIKAIFKEPTVTPTADQVKRLGLRKSWGSPNGAMRRGWNGITISRDTIHIDGVELGYKKPVLFERHAVGGEYSAGYKNVGKGKLTTTFTPSEGPDAGKTVVVDEREIVDEEAAVVTYHNPYDNVHDLARFFFGRCLEAKVTPYVVTKKTVFKWQEPFWQIMRTVFDEEFKAQFVAAGVMKEGEELVHLLSDAATMKLVQWRQGGFGMAAHNYDGDVLTDELAQVHKSPGFITSNLVGVHEDGTLIKEFEASHGTVADMDEARLRGEETSLNPLGMVEGLIGAMNHAADVHNIDRDRTHAFTTKMRTVIHQLFREGKGTRDLCGPSGLTTEQFIDAVAERLDA.

The N-terminal 26 residues, 1–26 (MTRVERGRVLARAIERAVAHRASARR), are a transit peptide targeting the mitochondrion. NAD(+)-binding positions include 138–140 (TVT) and N159. D-threo-isocitrate-binding positions include 157–163 (SPNGAMR), R193, Y200, K275, and D319. Residue D319 participates in Mg(2+) binding. Residue K324 participates in NAD(+) binding. D343 contributes to the D-threo-isocitrate binding site. Mg(2+) contacts are provided by D343 and D347. NAD(+) is bound by residues 380-385 (HGTVAD) and N399.

This sequence belongs to the isocitrate and isopropylmalate dehydrogenases family. As to quaternary structure, forms homodimers. Mg(2+) is required as a cofactor. Requires Mn(2+) as cofactor.

The protein localises to the mitochondrion. It carries out the reaction D-threo-isocitrate + NAD(+) = 2-oxoglutarate + CO2 + NADH. With respect to regulation, the homodimer exhibits allosteric regulation by isocitrate. Performs an essential role in the oxidative function of the tricarboxylic acid cycle and respiration. Catalyzes the decarboxylation of isocitrate to produce 2-oxoglutarate and generate NADH to provide electrons for energy production. The polypeptide is Isocitrate dehydrogenase (NAD(+)), mitochondrial (Ostreococcus tauri).